Reading from the N-terminus, the 120-residue chain is Spermidine export protein MdtJ (120 aa).

The next 4 membrane-spanning stretches (helical) occupy residues 1-21, 31-51, 54-74, and 81-101; these read MFYW…TLSM, AGFI…SFAV, IALG…ITIF, and EALS…IVLI.

This sequence belongs to the drug/metabolite transporter (DMT) superfamily. Small multidrug resistance (SMR) (TC 2.A.7.1) family. MdtJ subfamily. Forms a complex with MdtI.

It is found in the cell inner membrane. Functionally, catalyzes the excretion of spermidine. The chain is Spermidine export protein MdtJ from Salmonella paratyphi A (strain ATCC 9150 / SARB42).